The primary structure comprises 454 residues: NADP-specific glutamate dehydrogenase 1 (454 aa).

Residue S2 is modified to N-acetylserine. K110 is a catalytic residue. 174–203 (GVLTGKGLNWGGSLIRPEATGYGLVYYTQA) contributes to the NAD(+) binding site. Glycyl lysine isopeptide (Lys-Gly) (interchain with G-Cter in ubiquitin) cross-links involve residues K325, K371, and K433.

Belongs to the Glu/Leu/Phe/Val dehydrogenases family. In terms of assembly, homohexamer.

It catalyses the reaction L-glutamate + NADP(+) + H2O = 2-oxoglutarate + NH4(+) + NADPH + H(+). Its function is as follows. Catalyzes the incorporation of an ammonium ion into alpha-ketoglutarate to form L-glutamate, the major route of assimilation of ammonia into an organic form in yeast. This is NADP-specific glutamate dehydrogenase 1 from Saccharomyces cerevisiae (strain ATCC 204508 / S288c) (Baker's yeast).